Here is a 296-residue protein sequence, read N- to C-terminus: Phosphatidylglycerol--prolipoprotein diacylglyceryl transferase (296 aa).

A run of 3 helical transmembrane segments spans residues 17-37, 59-79, and 97-117; these read LAVR…IVVG, MMFY…VLFY, and GGMS…LFAW. Residue Arg142 participates in a 1,2-diacyl-sn-glycero-3-phospho-(1'-sn-glycerol) binding. Transmembrane regions (helical) follow at residues 230-250 and 265-285; these read MGAI…TVEF and LSMG…MMIW.

It belongs to the Lgt family.

The protein localises to the cell inner membrane. It catalyses the reaction L-cysteinyl-[prolipoprotein] + a 1,2-diacyl-sn-glycero-3-phospho-(1'-sn-glycerol) = an S-1,2-diacyl-sn-glyceryl-L-cysteinyl-[prolipoprotein] + sn-glycerol 1-phosphate + H(+). The protein operates within protein modification; lipoprotein biosynthesis (diacylglyceryl transfer). Its function is as follows. Catalyzes the transfer of the diacylglyceryl group from phosphatidylglycerol to the sulfhydryl group of the N-terminal cysteine of a prolipoprotein, the first step in the formation of mature lipoproteins. The protein is Phosphatidylglycerol--prolipoprotein diacylglyceryl transferase of Burkholderia mallei (strain NCTC 10247).